A 202-amino-acid polypeptide reads, in one-letter code: Large ribosomal subunit protein uL18 (202 aa).

It belongs to the universal ribosomal protein uL18 family. Part of the 50S ribosomal subunit. Contacts the 5S and 23S rRNAs.

This is one of the proteins that bind and probably mediate the attachment of the 5S RNA into the large ribosomal subunit, where it forms part of the central protuberance. The sequence is that of Large ribosomal subunit protein uL18 from Methanopyrus kandleri (strain AV19 / DSM 6324 / JCM 9639 / NBRC 100938).